Reading from the N-terminus, the 489-residue chain is Protein nucleotidyltransferase YdiU (489 aa).

8 residues coordinate ATP: glycine 88, glycine 90, arginine 91, lysine 111, aspartate 123, glycine 124, arginine 174, and arginine 181. Aspartate 250 (proton acceptor) is an active-site residue. Mg(2+) contacts are provided by asparagine 251 and aspartate 260. Aspartate 260 contacts ATP.

This sequence belongs to the SELO family. Mg(2+) serves as cofactor. Mn(2+) is required as a cofactor.

It catalyses the reaction L-seryl-[protein] + ATP = 3-O-(5'-adenylyl)-L-seryl-[protein] + diphosphate. It carries out the reaction L-threonyl-[protein] + ATP = 3-O-(5'-adenylyl)-L-threonyl-[protein] + diphosphate. The catalysed reaction is L-tyrosyl-[protein] + ATP = O-(5'-adenylyl)-L-tyrosyl-[protein] + diphosphate. The enzyme catalyses L-histidyl-[protein] + UTP = N(tele)-(5'-uridylyl)-L-histidyl-[protein] + diphosphate. It catalyses the reaction L-seryl-[protein] + UTP = O-(5'-uridylyl)-L-seryl-[protein] + diphosphate. It carries out the reaction L-tyrosyl-[protein] + UTP = O-(5'-uridylyl)-L-tyrosyl-[protein] + diphosphate. Nucleotidyltransferase involved in the post-translational modification of proteins. It can catalyze the addition of adenosine monophosphate (AMP) or uridine monophosphate (UMP) to a protein, resulting in modifications known as AMPylation and UMPylation. The protein is Protein nucleotidyltransferase YdiU of Vibrio cholerae serotype O1 (strain ATCC 39315 / El Tor Inaba N16961).